Here is a 224-residue protein sequence, read N- to C-terminus: Urease accessory protein UreF (224 aa).

The protein belongs to the UreF family. As to quaternary structure, ureD, UreF and UreG form a complex that acts as a GTP-hydrolysis-dependent molecular chaperone, activating the urease apoprotein by helping to assemble the nickel containing metallocenter of UreC. The UreE protein probably delivers the nickel.

The protein localises to the cytoplasm. Its function is as follows. Required for maturation of urease via the functional incorporation of the urease nickel metallocenter. In Pseudomonas putida (strain ATCC 700007 / DSM 6899 / JCM 31910 / BCRC 17059 / LMG 24140 / F1), this protein is Urease accessory protein UreF.